The chain runs to 411 residues: Probable UDP-arabinose 4-epimerase 3 (411 aa).

Polar residues predominate over residues 1–13; that stretch reads MLSFSRARSQGRN. A disordered region spans residues 1–22; it reads MLSFSRARSQGRNTRPLGGGME. Residues 1 to 31 lie on the Cytoplasmic side of the membrane; that stretch reads MLSFSRARSQGRNTRPLGGGMEYLEPKRKSN. A helical; Signal-anchor for type II membrane protein membrane pass occupies residues 32 to 50; the sequence is VMGKIILVVSLTALCIFML. Residues 51 to 411 are Lumenal-facing; sequence KHAPSFTSPT…KTHPHGYASS (361 aa). Residue 71–102 participates in NAD(+) binding; that stretch reads HVLVTGGAGYIGSHAALRLLKDSYRVTIVDNL. The active-site Proton acceptor is Tyr-219.

It belongs to the NAD(P)-dependent epimerase/dehydratase family. Requires NAD(+) as cofactor.

It localises to the golgi apparatus. The protein resides in the golgi stack membrane. It carries out the reaction UDP-beta-L-arabinopyranose = UDP-alpha-D-xylose. It functions in the pathway nucleotide-sugar biosynthesis; UDP-L-arabinose biosynthesis; UDP-L-arabinose from UDP-alpha-D-xylose: step 1/1. It participates in cell wall biogenesis; cell wall polysaccharide biosynthesis. In Arabidopsis thaliana (Mouse-ear cress), this protein is Probable UDP-arabinose 4-epimerase 3.